A 183-amino-acid polypeptide reads, in one-letter code: UPF0398 protein BLi02355/BL05236 (183 aa).

Belongs to the UPF0398 family.

The sequence is that of UPF0398 protein BLi02355/BL05236 from Bacillus licheniformis (strain ATCC 14580 / DSM 13 / JCM 2505 / CCUG 7422 / NBRC 12200 / NCIMB 9375 / NCTC 10341 / NRRL NRS-1264 / Gibson 46).